The primary structure comprises 901 residues: HTH-type transcriptional regulator MalT (901 aa).

39–46 (SPAGYGKT) provides a ligand contact to ATP. One can recognise an HTH luxR-type domain in the interval 829–894 (ELIRTSPLTQ…AAVQHAQKLL (66 aa)). Residues 853–872 (NEQIAGELEVAATTIKTHIR) constitute a DNA-binding region (H-T-H motif).

The protein belongs to the MalT family. Monomer in solution. Oligomerizes to an active state in the presence of the positive effectors ATP and maltotriose.

Its activity is regulated as follows. Activated by ATP and maltotriose, which are both required for DNA binding. Functionally, positively regulates the transcription of the maltose regulon whose gene products are responsible for uptake and catabolism of malto-oligosaccharides. Specifically binds to the promoter region of its target genes, recognizing a short DNA motif called the MalT box. The polypeptide is HTH-type transcriptional regulator MalT (Escherichia coli O6:K15:H31 (strain 536 / UPEC)).